The primary structure comprises 808 residues: Sucrose synthase isoform 1 (808 aa).

The segment at 277–754 is GT-B glycosyltransferase; that stretch reads MVFNVVILSP…GLKRIQEKYT (478 aa).

The protein belongs to the glycosyltransferase 1 family. Plant sucrose synthase subfamily. In terms of assembly, homotetramer. In terms of tissue distribution, expressed in stems, in roots at different developmental stages, and in flower buds, flowers and maturing seeds, with the highest levels in strong utilization sinks for sucrose such as growing stems and tap root tips.

The enzyme catalyses an NDP-alpha-D-glucose + D-fructose = a ribonucleoside 5'-diphosphate + sucrose + H(+). Its activity is regulated as follows. Fructose acts as a non-competitive inhibitor with an inhibition constant of 17.2 mM. In contrast, glucose inhibits uncompetitively with an inhibition constant of 4.3 mM. In terms of biological role, sucrose-cleaving enzyme that provides UDP-glucose and fructose for various metabolic pathways. The sequence is that of Sucrose synthase isoform 1 from Daucus carota (Wild carrot).